The primary structure comprises 141 residues: Large ribosomal subunit protein uL6 (141 aa).

The protein belongs to the universal ribosomal protein uL6 family.

This Haemonchus contortus (Barber pole worm) protein is Large ribosomal subunit protein uL6.